The primary structure comprises 313 residues: MATRLSDLFGNSRIIAGLLVNLLSSICIVFINKWIYVHYGFPNMTLTLIHFVMTWLGLFICQKMDIFAPKSLRPSKILLLALSFCGFVVFTNLSLQSNTIGTYQLAKVMTTPVIIAIQTMYYRKTFSTKIKLTLVPITLGVILNSYYDVRFNLMGMIFATLGVLVTSLYQVWVGAKQHELQVNSMQLLYYQAPMSSAFLLVLVPFFEPLTGDGGIFGPWSFLALFMVLLSGVIAFLVNLSIYWIIGNTSPVTYNMFGHFKFCITLLGGYVLFQDPLSLNQGLGILCTLTGILAYTHFKLAEQEEGKSRLTQRP.

10 helical membrane passes run 14–34 (IIAG…INKW), 40–60 (GFPN…GLFI), 77–97 (ILLL…SLQS), 100–122 (IGTY…TMYY), 130–146 (IKLT…LNSY), 153–173 (LMGM…QVWV), 187–207 (LLYY…PFFE), 215–235 (IFGP…VIAF), 252–272 (TYNM…YVLF), and 275–295 (PLSL…LAYT).

This sequence belongs to the TPT transporter family. SLC35E subfamily.

The protein localises to the membrane. Its function is as follows. Putative transporter. The chain is Solute carrier family 35 member E3 (slc35e3) from Danio rerio (Zebrafish).